The primary structure comprises 218 residues: MKFVAFERAKQGTGASRRLRITGRTPGIVYGGTAEPILIEIDHNALWHAIKKEAFHGSILEMELGGTEHKVLLRDLQMHPYKQQVQHIDFQRVEARTRMTVKVPVHFSGEEESPAVKTENCLVTHVLTEMTVSCFPADIPDFIAVDLGGLTKGKSLHVKDIVLPKRVKAAVKGQVNPVMVSVTPIVEEVVEVAPVVVDPKAAKGKAGAKPAAKPAAKK.

This sequence belongs to the bacterial ribosomal protein bL25 family. CTC subfamily. In terms of assembly, part of the 50S ribosomal subunit; part of the 5S rRNA/L5/L18/L25 subcomplex. Contacts the 5S rRNA. Binds to the 5S rRNA independently of L5 and L18.

In terms of biological role, this is one of the proteins that binds to the 5S RNA in the ribosome where it forms part of the central protuberance. The chain is Large ribosomal subunit protein bL25 from Polaromonas naphthalenivorans (strain CJ2).